Consider the following 535-residue polypeptide: SIR4-interacting protein SIF2 (535 aa).

Residues 4–36 (TSEELNYLIWRYCQEMGHEVSALALQDETRVLE) enclose the LisH domain. Positions 104 to 140 (EGRFTLETNSESNKAGEDGASTVERETQEDDTNSIDS) are disordered. The segment covering 130–140 (TQEDDTNSIDS) has biased composition (acidic residues). Phosphoserine is present on Ser-137. WD repeat units lie at residues 155-186 (VKLD…RLAR), 218-248 (KTTN…RLWN), 259-289 (FHRA…ILWN), 316-345 (GDGS…FVYQ), 357-387 (GHHG…RIWH), 399-428 (GHSQ…RLWS), 440-470 (VDGV…NVYD), and 503-534 (SQDN…SVVA).

Homotetramer. Interacts with SIR4 N-terminal domain. Interacts with a complex composed of SIN3 and RPD3. Identified in the Set3C complex with HOS2, HST1, SNT1, CPR1, HOS4/YIL112W and SET3.

Its subcellular location is the nucleus. Its function is as follows. Antagonizes telomeric silencing in yeast. May recruit SIR4 to non-telomeric sites or repression. The sequence is that of SIR4-interacting protein SIF2 (SIF2) from Saccharomyces cerevisiae (strain ATCC 204508 / S288c) (Baker's yeast).